Reading from the N-terminus, the 238-residue chain is UPF0280 protein Msm_0088 (238 aa).

It belongs to the UPF0280 family.

The protein is UPF0280 protein Msm_0088 of Methanobrevibacter smithii (strain ATCC 35061 / DSM 861 / OCM 144 / PS).